A 341-amino-acid chain; its full sequence is Solute carrier family 25 member 43 (341 aa).

3 Solcar repeats span residues 11–101 (TGGQ…TDDL), 105–185 (SQWS…LLVY), and 200–298 (SLPQ…LYQN). A run of 6 helical transmembrane segments spans residues 16–36 (LLCA…LELA), 68–88 (LWKG…VQLA), 110–130 (IMAG…TDLI), 166–186 (GVSL…LVYM), 205–225 (FANV…FETV), and 262–282 (VLGL…YFGI).

The protein belongs to the mitochondrial carrier (TC 2.A.29) family.

The protein localises to the mitochondrion inner membrane. In Homo sapiens (Human), this protein is Solute carrier family 25 member 43 (SLC25A43).